Here is a 442-residue protein sequence, read N- to C-terminus: Citrate synthase (442 aa).

Catalysis depends on residues histidine 274, histidine 320, and aspartate 375.

Belongs to the citrate synthase family.

The enzyme catalyses oxaloacetate + acetyl-CoA + H2O = citrate + CoA + H(+). It participates in carbohydrate metabolism; tricarboxylic acid cycle; isocitrate from oxaloacetate: step 1/2. In terms of biological role, catalyzes both citrate generation and citrate cleavage. Part of a reversible tricarboxylic acid (TCA) cycle that can fix carbon dioxide autotrophically and may represent an ancestral mode of the conventional reductive TCA (rTCA) cycle. The direction is controlled by the available carbon source(s). The sequence is that of Citrate synthase from Thermosulfidibacter takaii (strain DSM 17441 / JCM 13301 / NBRC 103674 / ABI70S6).